A 353-amino-acid chain; its full sequence is Chorismate synthase (353 aa).

Arginine 48 contacts NADP(+). Residues 128–130 (RAS), glycine 280, 295–299 (KPIPS), and arginine 321 each bind FMN.

It belongs to the chorismate synthase family. As to quaternary structure, homotetramer. FMNH2 is required as a cofactor.

The enzyme catalyses 5-O-(1-carboxyvinyl)-3-phosphoshikimate = chorismate + phosphate. It functions in the pathway metabolic intermediate biosynthesis; chorismate biosynthesis; chorismate from D-erythrose 4-phosphate and phosphoenolpyruvate: step 7/7. In terms of biological role, catalyzes the anti-1,4-elimination of the C-3 phosphate and the C-6 proR hydrogen from 5-enolpyruvylshikimate-3-phosphate (EPSP) to yield chorismate, which is the branch point compound that serves as the starting substrate for the three terminal pathways of aromatic amino acid biosynthesis. This reaction introduces a second double bond into the aromatic ring system. This chain is Chorismate synthase, found in Nitratidesulfovibrio vulgaris (strain DSM 19637 / Miyazaki F) (Desulfovibrio vulgaris).